The chain runs to 328 residues: tRNA dimethylallyltransferase (328 aa).

G23–S30 is a binding site for ATP. Residue T25 to S30 participates in substrate binding. Positions D48–Q51 are interaction with substrate tRNA.

The protein belongs to the IPP transferase family. In terms of assembly, monomer. Requires Mg(2+) as cofactor.

It catalyses the reaction adenosine(37) in tRNA + dimethylallyl diphosphate = N(6)-dimethylallyladenosine(37) in tRNA + diphosphate. Functionally, catalyzes the transfer of a dimethylallyl group onto the adenine at position 37 in tRNAs that read codons beginning with uridine, leading to the formation of N6-(dimethylallyl)adenosine (i(6)A). This Rhodopseudomonas palustris (strain BisA53) protein is tRNA dimethylallyltransferase.